We begin with the raw amino-acid sequence, 165 residues long: Protein SprT (165 aa).

The 144-residue stretch at 20–163 folds into the SprT-like domain; the sequence is EKLTQANLKL…RCVHCGEQLV (144 aa). His78 lines the Zn(2+) pocket. Residue Glu79 is part of the active site. Residue His82 coordinates Zn(2+).

Belongs to the SprT family. Requires Zn(2+) as cofactor.

Its subcellular location is the cytoplasm. The polypeptide is Protein SprT (Escherichia coli O139:H28 (strain E24377A / ETEC)).